We begin with the raw amino-acid sequence, 522 residues long: Peptide methionine sulfoxide reductase MsrA/MsrB (522 aa).

Residues 17–174 (LALGACSPKI…ALALIRNPNA (158 aa)) form the Thioredoxin domain. Cys-68 and Cys-71 are disulfide-bonded. Residues 199-354 (RTIYLAGGCF…PNGYCHIDIR (156 aa)) are peptide methionine sulfoxide reductase A. The active site involves Cys-207. Residues 383–506 (DAELKRTLTE…NGASLKFIPL (124 aa)) form the MsrB domain. A disulfide bridge connects residues Cys-440 and Cys-495. Residue Cys-495 is the Nucleophile of the active site.

It in the N-terminal section; belongs to the thioredoxin family. The protein in the central section; belongs to the MsrA Met sulfoxide reductase family. In the C-terminal section; belongs to the MsrB Met sulfoxide reductase family.

It catalyses the reaction L-methionyl-[protein] + [thioredoxin]-disulfide + H2O = L-methionyl-(S)-S-oxide-[protein] + [thioredoxin]-dithiol. The enzyme catalyses [thioredoxin]-disulfide + L-methionine + H2O = L-methionine (S)-S-oxide + [thioredoxin]-dithiol. It carries out the reaction L-methionyl-[protein] + [thioredoxin]-disulfide + H2O = L-methionyl-(R)-S-oxide-[protein] + [thioredoxin]-dithiol. In terms of biological role, has an important function as a repair enzyme for proteins that have been inactivated by oxidation. Catalyzes the reversible oxidation-reduction of methionine sulfoxide in proteins to methionine. This Neisseria gonorrhoeae protein is Peptide methionine sulfoxide reductase MsrA/MsrB (msrAB).